Reading from the N-terminus, the 1497-residue chain is ABC multidrug transporter C (1497 aa).

Residues 1-13 (MSLLGTINPNINP) show a composition bias toward polar residues. The disordered stretch occupies residues 1–21 (MSLLGTINPNINPERTVAGRG). N-linked (GlcNAc...) asparagine glycosylation is found at Asn137 and Asn336. In terms of domain architecture, ABC transporter 1 spans 158–412 (LEVGTLVRRI…FTNMGFECPE (255 aa)). 5 consecutive transmembrane segments (helical) span residues 523-543 (LTMS…SVFY), 557-577 (ALLF…ILTL), 599-621 (AIAS…NLTL), 632-652 (GAFF…SMLF), and 665-685 (ALVP…FTIP). An N-linked (GlcNAc...) asparagine glycan is attached at Asn762. The helical transmembrane segment at 777–797 (GIMFGFMFFFMFTYLTATEYI) threads the bilayer. The interval 815–843 (QPTGSHDVEKSPEVSSAAKTDEASSKEAT) is disordered. An ABC transporter 2 domain is found at 853–1096 (FQWKDVCYDI…LASYFERNGA (244 aa)). 889–896 (GVSGAGKT) provides a ligand contact to ATP. 5 helical membrane passes run 1192–1212 (YIYS…FSFF), 1226–1246 (FSIF…MPNF), 1273–1293 (IIVE…CWYY), 1313–1333 (LMFL…HMMI), and 1352–1372 (LCLI…FWIF). An N-linked (GlcNAc...) asparagine glycan is attached at Asn1411. The chain crosses the membrane as a helical span at residues 1464–1484 (FGIMWAYIIFNIFAAVFIYWL).

This sequence belongs to the ABC transporter superfamily. ABCG family. PDR (TC 3.A.1.205) subfamily.

The protein resides in the cell membrane. The catalysed reaction is fluconazole(in) + ATP + H2O = fluconazole(out) + ADP + phosphate + H(+). It carries out the reaction itraconazole(in) + ATP + H2O = itraconazole(out) + ADP + phosphate + H(+). It catalyses the reaction voriconazole(in) + ATP + H2O = voriconazole(out) + ADP + phosphate + H(+). With respect to regulation, the efflux inhibitor FK506 impairs the transport activity. Its function is as follows. Pleiotropic ABC efflux transporter that shows a strong substrate specificity for the azole class of drugs such as lotrimazole (CLT), fluconazole (FLC), itraconazole (ITC), ketoconazole (KTC), posaconazole (POS), tebuconazole (TEBZ), and voriconazole (VRC). Is also able to transport rhodamine 6G (R-6G), a known substrate for many ABC transporters. Required for normal pathogenesis in a Galleria mellonella (greater wax moth) infection model. The protein is ABC multidrug transporter C of Aspergillus fumigatus (strain ATCC MYA-4609 / CBS 101355 / FGSC A1100 / Af293) (Neosartorya fumigata).